The primary structure comprises 225 residues: Uracil-DNA glycosylase (225 aa).

Asp65 functions as the Proton acceptor in the catalytic mechanism.

It belongs to the uracil-DNA glycosylase (UDG) superfamily. UNG family.

The protein resides in the cytoplasm. It catalyses the reaction Hydrolyzes single-stranded DNA or mismatched double-stranded DNA and polynucleotides, releasing free uracil.. In terms of biological role, excises uracil residues from the DNA which can arise as a result of misincorporation of dUMP residues by DNA polymerase or due to deamination of cytosine. This is Uracil-DNA glycosylase from Clostridium botulinum (strain Alaska E43 / Type E3).